Here is a 645-residue protein sequence, read N- to C-terminus: Cytoplasmic dynein 1 intermediate chain 1 (645 aa).

Composition is skewed to basic and acidic residues over residues 1–13 (MSDK…ELER) and 20–58 (QIRE…KRRE). Disordered stretches follow at residues 1 to 58 (MSDK…KRRE) and 96 to 125 (MSPS…RTLQ). S2 is modified (N-acetylserine). The interval 2–123 (SDKSDLKAEL…SGDLGPLTRT (122 aa)) is interaction with DCTN1. S50 and S100 each carry phosphoserine. Residues 96–107 (MSPSSKSVSTPS) show a composition bias toward low complexity. Phosphothreonine is present on T105. S107, S111, and S114 each carry phosphoserine. An interaction with DYNLT1 region spans residues 147–163 (KLGVSKVTQVDFLPREV). Positions 169-221 (ETQTPLATHQSEEDEEDEEMVESKVGQDSELENQDKKQEVKEAPPRELTEEEK) are disordered. Phosphothreonine is present on T176. S179 and S197 each carry phosphoserine. Basic and acidic residues predominate over residues 189 to 221 (VESKVGQDSELENQDKKQEVKEAPPRELTEEEK). WD repeat units lie at residues 285–334 (SKHR…TTPE), 338–378 (HCQS…RTPV), 387–428 (AHTH…TPQE), 437–477 (SKPV…AGIG), 482–527 (GHQG…PLYS), 530–570 (DNAD…EVPT), and 576–615 (EGAS…VPHN). Phosphoserine is present on S635.

This sequence belongs to the dynein intermediate chain family. Homodimer. The cytoplasmic dynein 1 complex consists of two catalytic heavy chains (HCs) and a number of non-catalytic subunits presented by intermediate chains (ICs), light intermediate chains (LICs) and light chains (LCs); the composition seems to vary in respect to the IC, LIC and LC composition. The heavy chain homodimer serves as a scaffold for the probable homodimeric assembly of the respective non-catalytic subunits. The ICs and LICs bind directly to the HC dimer and the LCs assemble on the IC dimer. Interacts with DYNC1H1. Interacts with DYNLT1 and DYNLT3. Interacts with DCTN1. Interacts with MCRS1; the interaction is required for the proper distribution of centriolar satellites.

Its subcellular location is the cytoplasm. It localises to the chromosome. The protein localises to the centromere. The protein resides in the kinetochore. It is found in the cytoskeleton. Its subcellular location is the spindle pole. Its function is as follows. Acts as one of several non-catalytic accessory components of the cytoplasmic dynein 1 complex that are thought to be involved in linking dynein to cargos and to adapter proteins that regulate dynein function. Cytoplasmic dynein 1 acts as a motor for the intracellular retrograde motility of vesicles and organelles along microtubules. The intermediate chains mediate the binding of dynein to dynactin via its 150 kDa component (p150-glued) DCTN1. May play a role in mediating the interaction of cytoplasmic dynein with membranous organelles and kinetochores. The sequence is that of Cytoplasmic dynein 1 intermediate chain 1 (DYNC1I1) from Homo sapiens (Human).